A 761-amino-acid chain; its full sequence is Protein spire homolog 1 (761 aa).

2 disordered regions span residues 1–23 (MTDG…ARPE) and 160–183 (DCPD…AEVS). Residues 36 to 223 (LCLEEILTLY…RALYAETKEL (188 aa)) enclose the KIND domain. Acidic residues predominate over residues 160–180 (DCPDEGYEATEEEDEGEEENA). Residues 218–246 (AETKELRTFLEKIKSAKENLRKMEGETEE) adopt a coiled-coil conformation. WH2 domains lie at 295 to 313 (PYEM…LRKV) and 359 to 376 (LHER…LRPV). 2 disordered regions span residues 375-406 (PVSP…DIPD) and 419-539 (ANGT…KSLA). Low complexity predominate over residues 469-480 (SSSSISTSLVED). The segment covering 504-520 (PDKRIAPQRRHSIEKEA) has biased composition (basic and acidic residues). The segment at 557 to 577 (LTLTVEEVMHIRQVLVKAELE) is spir-box. 2 disordered regions span residues 630 to 694 (PSKP…DELE) and 728 to 761 (STKR…IKEV). Residues 636-647 (SLPISSLGPSIL) show a composition bias toward low complexity. A compositionally biased stretch (basic and acidic residues) spans 682–693 (KHGDRSSSKDEL). Residues 728-739 (STKRARLHRRTH) show a composition bias toward basic residues. Residues 740–749 (SVYSSSTSSS) show a composition bias toward low complexity.

It belongs to the spire family.

It is found in the cytoplasm. The protein localises to the cytoskeleton. Its subcellular location is the cytosol. It localises to the cleavage furrow. The protein resides in the perinuclear region. It is found in the cell membrane. The protein localises to the cytoplasmic vesicle membrane. In terms of biological role, acts as an actin nucleation factor, remains associated with the slow-growing pointed end of the new filament. Involved in intracellular vesicle transport along actin fibers, providing a novel link between actin cytoskeleton dynamics and intracellular transport. Required for asymmetric spindle positioning and asymmetric cell division during meiosis. Required for normal formation of the cleavage furrow and for polar body extrusion during female germ cell meiosis. Also acts in the nucleus: together with FMN2, promotes assembly of nuclear actin filaments in response to DNA damage in order to facilitate movement of chromatin and repair factors after DNA damage. In addition, promotes innate immune signaling downstream of dsRNA sensing. Mechanistically, contributes to IRF3 phosphorylation and activation downstream of MAVS and upstream of TBK1. The polypeptide is Protein spire homolog 1 (Danio rerio (Zebrafish)).